A 172-amino-acid polypeptide reads, in one-letter code: Lipoprotein signal peptidase (172 aa).

Helical transmembrane passes span 70–90 (ERWL…AWIW) and 94–114 (AKGD…NIAD). Active-site residues include Asp-123 and Asp-142. The chain crosses the membrane as a helical span at residues 134–154 (PFLVFNVADAAITIGVLILVL).

Belongs to the peptidase A8 family.

The protein localises to the cell inner membrane. The catalysed reaction is Release of signal peptides from bacterial membrane prolipoproteins. Hydrolyzes -Xaa-Yaa-Zaa-|-(S,diacylglyceryl)Cys-, in which Xaa is hydrophobic (preferably Leu), and Yaa (Ala or Ser) and Zaa (Gly or Ala) have small, neutral side chains.. The protein operates within protein modification; lipoprotein biosynthesis (signal peptide cleavage). Functionally, this protein specifically catalyzes the removal of signal peptides from prolipoproteins. The sequence is that of Lipoprotein signal peptidase from Rhizorhabdus wittichii (strain DSM 6014 / CCUG 31198 / JCM 15750 / NBRC 105917 / EY 4224 / RW1) (Sphingomonas wittichii).